A 335-amino-acid chain; its full sequence is Anthranilate phosphoribosyltransferase (335 aa).

Residues Gly79, 82-83 (GD), Thr87, 89-92 (NIST), 107-115 (KHCNQGVSS), and Ser119 contribute to the 5-phospho-alpha-D-ribose 1-diphosphate site. Gly79 is an anthranilate binding site. Residue Ser91 coordinates Mg(2+). Asn110 contacts anthranilate. Position 165 (Arg165) interacts with anthranilate. 2 residues coordinate Mg(2+): Asp223 and Glu224.

The protein belongs to the anthranilate phosphoribosyltransferase family. Homodimer. The cofactor is Mg(2+).

It carries out the reaction N-(5-phospho-beta-D-ribosyl)anthranilate + diphosphate = 5-phospho-alpha-D-ribose 1-diphosphate + anthranilate. The protein operates within amino-acid biosynthesis; L-tryptophan biosynthesis; L-tryptophan from chorismate: step 2/5. Catalyzes the transfer of the phosphoribosyl group of 5-phosphorylribose-1-pyrophosphate (PRPP) to anthranilate to yield N-(5'-phosphoribosyl)-anthranilate (PRA). This is Anthranilate phosphoribosyltransferase from Buchnera aphidicola subsp. Diuraphis noxia.